The chain runs to 379 residues: Glucose-1-phosphate adenylyltransferase (379 aa).

Alpha-D-glucose 1-phosphate contacts are provided by residues G164, 179-180 (EK), and S190.

It belongs to the bacterial/plant glucose-1-phosphate adenylyltransferase family. In terms of assembly, homotetramer.

The catalysed reaction is alpha-D-glucose 1-phosphate + ATP + H(+) = ADP-alpha-D-glucose + diphosphate. Its pathway is glycan biosynthesis; glycogen biosynthesis. Involved in the biosynthesis of ADP-glucose, a building block required for the elongation reactions to produce glycogen. Catalyzes the reaction between ATP and alpha-D-glucose 1-phosphate (G1P) to produce pyrophosphate and ADP-Glc. The chain is Glucose-1-phosphate adenylyltransferase from Streptococcus agalactiae serotype III (strain NEM316).